The primary structure comprises 359 residues: DNA polymerase IV (359 aa).

A UmuC domain is found at 7-188 (IIHIDMDAFY…LPIGKFFGVG (182 aa)). 2 residues coordinate Mg(2+): Asp11 and Asp106. Residue Glu107 is part of the active site.

This sequence belongs to the DNA polymerase type-Y family. In terms of assembly, monomer. The cofactor is Mg(2+).

The protein resides in the cytoplasm. The catalysed reaction is DNA(n) + a 2'-deoxyribonucleoside 5'-triphosphate = DNA(n+1) + diphosphate. Its function is as follows. Poorly processive, error-prone DNA polymerase involved in untargeted mutagenesis. Copies undamaged DNA at stalled replication forks, which arise in vivo from mismatched or misaligned primer ends. These misaligned primers can be extended by PolIV. Exhibits no 3'-5' exonuclease (proofreading) activity. May be involved in translesional synthesis, in conjunction with the beta clamp from PolIII. This chain is DNA polymerase IV, found in Clostridium perfringens (strain SM101 / Type A).